The chain runs to 447 residues: MREIVHLQTGQCGNQIGAAFWQTISGEHGLDGSGVYNGTSDLQLERMNVYFNEASGNKYVPRAVLVDLEPGTMDAVRAGPFGQLFRPDNFVFGQSGAGNNWAKGHYTEGAELVDQVLDVVRREAEGCDCLQGFQITHSLGGGTGAGMGTLLISKIREEFPDRMMATFSVMPSPKVSDTVVEPYNATLSVHQLVENSDATFCIDNEALYDICMRTLKLNNPSYGDLNHLVSAVMSGVTTCLRFPGQLNSDLRKLAVNMVPFPRLHFFMVGFAPLTSRGAHSFRAVTVPELTQQIFDPKNMMAASDFRNGRYLTCSAIYRGKVSMKEVEDQIRNVQNKNTAYFVEWIPNNVQTALCSIPPRGLKMSSTFVGNSTSIQELFKRVGDQFSAMFRRKAFLHWYTGEGMDEMEFTEAESNMNDLVSEYQQYQEASVSDAEEEYDEEAPLEGEE.

GTP is bound by residues Gln11, Glu69, Ser138, Gly142, Thr143, Gly144, Asn204, and Asn226. Glu69 contacts Mg(2+). Residues 424–447 (QYQEASVSDAEEEYDEEAPLEGEE) are disordered. Positions 432–447 (DAEEEYDEEAPLEGEE) are enriched in acidic residues.

It belongs to the tubulin family. Dimer of alpha and beta chains. A typical microtubule is a hollow water-filled tube with an outer diameter of 25 nm and an inner diameter of 15 nM. Alpha-beta heterodimers associate head-to-tail to form protofilaments running lengthwise along the microtubule wall with the beta-tubulin subunit facing the microtubule plus end conferring a structural polarity. Microtubules usually have 13 protofilaments but different protofilament numbers can be found in some organisms and specialized cells. It depends on Mg(2+) as a cofactor.

The protein localises to the cytoplasm. Its subcellular location is the cytoskeleton. Functionally, tubulin is the major constituent of microtubules, a cylinder consisting of laterally associated linear protofilaments composed of alpha- and beta-tubulin heterodimers. Microtubules grow by the addition of GTP-tubulin dimers to the microtubule end, where a stabilizing cap forms. Below the cap, tubulin dimers are in GDP-bound state, owing to GTPase activity of alpha-tubulin. This chain is Tubulin beta chain (TUB1), found in Zymoseptoria tritici (Speckled leaf blotch fungus).